We begin with the raw amino-acid sequence, 1782 residues long: Vitellogenin (1782 aa).

Positions 1-15 (MKLFVLAAIIAAVSS) are cleaved as a signal peptide. Residues 34 to 812 (WQVGKQYRYE…SEDSLLPKDF (779 aa)) enclose the Vitellogenin domain. 2 disordered regions span residues 333–367 (HYES…SRRS) and 379–406 (VLKK…INDD). The span at 344 to 358 (ESHEFNFPEQHEHPH) shows a compositional bias: basic and acidic residues. Positions 386-400 (ESSSGSSSSSADSSS) are enriched in low complexity. N-linked (GlcNAc...) asparagine glycans are attached at residues Asn-569, Asn-587, Asn-1357, Asn-1463, and Asn-1596. The 190-residue stretch at 1449–1638 (PYCSIDGTRI…AYSLNEENSD (190 aa)) folds into the VWFD domain. A disulfide bond links Cys-1451 and Cys-1602.

As to quaternary structure, heterotetramer of two heavy and two light chains. Glycosylated and phosphorylated. Detected in oocytes (at protein level). Produced by the fat body, where it is cleaved before being secreted into hemolymph. Sequestered then by a single class of receptor mediated endocytosis in the ovary.

Its subcellular location is the secreted. The protein localises to the cytoplasm. It localises to the cytoplasmic granule. Precursor of the egg-yolk proteins that are sources of nutrients during embryonic development. This chain is Vitellogenin (VG), found in Bombyx mori (Silk moth).